The chain runs to 188 residues: RNA 2',3'-cyclic phosphodiesterase (188 aa).

H42 functions as the Proton donor in the catalytic mechanism. Short sequence motifs (HXTX) lie at residues 42–45 and 130–133; these read HMTL and HVTI. H130 (proton acceptor) is an active-site residue.

It belongs to the 2H phosphoesterase superfamily. ThpR family.

The enzyme catalyses a 3'-end 2',3'-cyclophospho-ribonucleotide-RNA + H2O = a 3'-end 2'-phospho-ribonucleotide-RNA + H(+). Its function is as follows. Hydrolyzes RNA 2',3'-cyclic phosphodiester to an RNA 2'-phosphomonoester. The polypeptide is RNA 2',3'-cyclic phosphodiesterase (Aquifex aeolicus (strain VF5)).